We begin with the raw amino-acid sequence, 515 residues long: Maturase K (515 aa).

It belongs to the intron maturase 2 family. MatK subfamily.

The protein resides in the plastid. It localises to the chloroplast. Functionally, usually encoded in the trnK tRNA gene intron. Probably assists in splicing its own and other chloroplast group II introns. The protein is Maturase K of Helonias bullata (Swamp pink).